Consider the following 124-residue polypeptide: Large ribosomal subunit protein bL12 (124 aa).

It belongs to the bacterial ribosomal protein bL12 family. As to quaternary structure, homodimer. Part of the ribosomal stalk of the 50S ribosomal subunit. Forms a multimeric L10(L12)X complex, where L10 forms an elongated spine to which 2 to 4 L12 dimers bind in a sequential fashion. Binds GTP-bound translation factors.

In terms of biological role, forms part of the ribosomal stalk which helps the ribosome interact with GTP-bound translation factors. Is thus essential for accurate translation. The chain is Large ribosomal subunit protein bL12 from Chlorobium chlorochromatii (strain CaD3).